Consider the following 681-residue polypeptide: DNA-directed RNA polymerase subunit beta' (681 aa).

Positions 69, 71, 87, and 90 each coordinate Zn(2+). Residues Asp489, Asp491, and Asp493 each contribute to the Mg(2+) site.

This sequence belongs to the RNA polymerase beta' chain family. RpoC1 subfamily. In terms of assembly, in plastids the minimal PEP RNA polymerase catalytic core is composed of four subunits: alpha, beta, beta', and beta''. When a (nuclear-encoded) sigma factor is associated with the core the holoenzyme is formed, which can initiate transcription. Mg(2+) serves as cofactor. Requires Zn(2+) as cofactor.

The protein resides in the plastid. It is found in the chloroplast. The catalysed reaction is RNA(n) + a ribonucleoside 5'-triphosphate = RNA(n+1) + diphosphate. Functionally, DNA-dependent RNA polymerase catalyzes the transcription of DNA into RNA using the four ribonucleoside triphosphates as substrates. The protein is DNA-directed RNA polymerase subunit beta' of Nicotiana tomentosiformis (Tobacco).